We begin with the raw amino-acid sequence, 428 residues long: Serine--tRNA ligase (428 aa).

237-239 is an L-serine binding site; the sequence is TAE. 268-270 contacts ATP; that stretch reads RSE. Glu-291 provides a ligand contact to L-serine. 355–358 is an ATP binding site; the sequence is EISS. Ser-390 serves as a coordination point for L-serine.

This sequence belongs to the class-II aminoacyl-tRNA synthetase family. Type-1 seryl-tRNA synthetase subfamily. As to quaternary structure, homodimer. The tRNA molecule binds across the dimer.

It is found in the cytoplasm. The enzyme catalyses tRNA(Ser) + L-serine + ATP = L-seryl-tRNA(Ser) + AMP + diphosphate + H(+). It catalyses the reaction tRNA(Sec) + L-serine + ATP = L-seryl-tRNA(Sec) + AMP + diphosphate + H(+). It participates in aminoacyl-tRNA biosynthesis; selenocysteinyl-tRNA(Sec) biosynthesis; L-seryl-tRNA(Sec) from L-serine and tRNA(Sec): step 1/1. Catalyzes the attachment of serine to tRNA(Ser). Is also able to aminoacylate tRNA(Sec) with serine, to form the misacylated tRNA L-seryl-tRNA(Sec), which will be further converted into selenocysteinyl-tRNA(Sec). This chain is Serine--tRNA ligase, found in Hydrogenovibrio crunogenus (strain DSM 25203 / XCL-2) (Thiomicrospira crunogena).